The following is a 111-amino-acid chain: Ribonuclease P protein component (111 aa).

This sequence belongs to the RnpA family. Consists of a catalytic RNA component (M1 or rnpB) and a protein subunit.

It catalyses the reaction Endonucleolytic cleavage of RNA, removing 5'-extranucleotides from tRNA precursor.. Its function is as follows. RNaseP catalyzes the removal of the 5'-leader sequence from pre-tRNA to produce the mature 5'-terminus. It can also cleave other RNA substrates such as 4.5S RNA. The protein component plays an auxiliary but essential role in vivo by binding to the 5'-leader sequence and broadening the substrate specificity of the ribozyme. The sequence is that of Ribonuclease P protein component from Clostridium botulinum (strain Okra / Type B1).